The chain runs to 281 residues: DegV domain-containing protein CPE2509 (281 aa).

Residues 4-279 (IAIITDSSCD…PGMVGVSIQK (276 aa)) enclose the DegV domain. Hexadecanoate contacts are provided by T60 and S93.

Its function is as follows. May bind long-chain fatty acids, such as palmitate, and may play a role in lipid transport or fatty acid metabolism. The chain is DegV domain-containing protein CPE2509 from Clostridium perfringens (strain 13 / Type A).